Consider the following 215-residue polypeptide: UPF0502 protein YceH (215 aa).

K80 carries the N6-acetyllysine modification.

This sequence belongs to the UPF0502 family.

The polypeptide is UPF0502 protein YceH (Escherichia coli O45:K1 (strain S88 / ExPEC)).